A 409-amino-acid polypeptide reads, in one-letter code: O-methyltransferase pyiA (409 aa).

A compositionally biased stretch (polar residues) spans 1–21; that stretch reads MASQDGTTELLSQSVNSTCIP. The disordered stretch occupies residues 1–46; that stretch reads MASQDGTTELLSQSVNSTCIPGSTYHVDRGRASSASTPPTSPPLSE. Aspartate 271 lines the S-adenosyl-L-methionine pocket. Histidine 317 serves as the catalytic Proton acceptor.

This sequence belongs to the class I-like SAM-binding methyltransferase superfamily. Cation-independent O-methyltransferase family.

It functions in the pathway mycotoxin biosynthesis. In terms of biological role, O-methyltransferase; part of the gene cluster that mediates the biosynthesis of the mycotoxin pyrichalasin H, a tyrosine-derived cytochalasan that inhibits the growth of rice seedlings, but also inhibits lymphocyte capping and actin polymerization and alters cell morphology. Pyrichalasin H is indicated as the responsible agent for the genus-specific pathogenicity of M.grisea toward crabgrass. The first step in the pathway is catalyzed by the O-methyltransferase pyiA which methylates free tyrosine to generate the precursor O-methyltyrosine. The hybrid PKS-NRPS pyiS, assisted by the enoyl reductase pyiC, are responsible for fusion of the O-methyltyrosine precursor and the polyketide backbone. The polyketide synthase module (PKS) of pyiS is responsible for the synthesis of the polyketide backbone and the downstream nonribosomal peptide synthetase (NRPS) amidates the carboxyl end of the polyketide with the O-methyltyrosine precursor. As the NRPS A-domain demonstrates substrate tolerance, pyiS can also use phenylalanine, tyrosine and even para-chlorophenylalanine as amino acid precursor, which leads to the production of novel cytochalasans, including halogenated cytochalasans. Because pyiS lacks a designated enoylreductase (ER) domain, the required activity is provided the enoyl reductase pyiC. Reduction by the hydrolyase pyiE leads to 1,5-dihydropyrrolone, which is substrate for dehydration and intra-molecular Diels-Alder cyclization by the Diels-Alderase pyiF to yield the required isoindolone-fused macrocycle. The tailoring cytochrome P450 monooxygenases piyD and piyG catalyze the hydroxylation at C-18 and C-7, respectivily, whereas the short-chain dehydrogenase/reductase pyiH reduces the carbonyl at C-21 in preparation for the transfer of an acetyl group by the acetyltransferase pyiB. These 3 reactions whose order is not clear yet, lead to the production of O-methylpyrichalasin J, a deacetylated pyrichalasin H. Finally, pyiB to converts O-methylpyrichalasin J into the final product pyrichalasin H via acetylation of C-21. The sequence is that of O-methyltransferase pyiA from Pyricularia grisea (Crabgrass-specific blast fungus).